The chain runs to 290 residues: Bifunctional protein FolD 3 (290 aa).

Residues 163-165 (GHS) and isoleucine 229 each bind NADP(+).

This sequence belongs to the tetrahydrofolate dehydrogenase/cyclohydrolase family. Homodimer.

The enzyme catalyses (6R)-5,10-methylene-5,6,7,8-tetrahydrofolate + NADP(+) = (6R)-5,10-methenyltetrahydrofolate + NADPH. It carries out the reaction (6R)-5,10-methenyltetrahydrofolate + H2O = (6R)-10-formyltetrahydrofolate + H(+). It participates in one-carbon metabolism; tetrahydrofolate interconversion. Its function is as follows. Catalyzes the oxidation of 5,10-methylenetetrahydrofolate to 5,10-methenyltetrahydrofolate and then the hydrolysis of 5,10-methenyltetrahydrofolate to 10-formyltetrahydrofolate. The sequence is that of Bifunctional protein FolD 3 from Roseobacter denitrificans (strain ATCC 33942 / OCh 114) (Erythrobacter sp. (strain OCh 114)).